An 845-amino-acid chain; its full sequence is Protein P (845 aa).

Positions 1-179 (MPLSYQHFRK…FCGSPYSWEQ (179 aa)) are terminal protein domain (TP). The tract at residues 180–348 (ELQHGRLVIK…YCLSHLVNLR (169 aa)) is spacer. Residues 226–252 (GLQPRQGRLASSQPSRSGSIRAKAHPS) are disordered. A compositionally biased stretch (polar residues) spans 234-243 (LASSQPSRSG). Residues 349 to 692 (EDWGPCDEHG…YMNLYPVARQ (344 aa)) are polymerase/reverse transcriptase domain (RT). Residues 359–602 (EHHIRIPRTP…YSLNFMGYII (244 aa)) form the Reverse transcriptase domain. 3 residues coordinate Mg(2+): aspartate 431, aspartate 553, and aspartate 554. The rnaseH domain (RH) stretch occupies residues 693–845 (RPGLCQVFAD…SPLHVAWRPP (153 aa)).

Belongs to the hepadnaviridae P protein family.

It catalyses the reaction DNA(n) + a 2'-deoxyribonucleoside 5'-triphosphate = DNA(n+1) + diphosphate. The enzyme catalyses Endonucleolytic cleavage to 5'-phosphomonoester.. Activated by host HSP70 and HSP40 in vitro to be able to bind the epsilon loop of the pgRNA. Because deletion of the RNase H region renders the protein partly chaperone-independent, the chaperones may be needed indirectly to relieve occlusion of the RNA-binding site by this domain. Inhibited by several reverse-transcriptase inhibitors: Lamivudine, Adefovir and Entecavir. In terms of biological role, multifunctional enzyme that converts the viral RNA genome into dsDNA in viral cytoplasmic capsids. This enzyme displays a DNA polymerase activity that can copy either DNA or RNA templates, and a ribonuclease H (RNase H) activity that cleaves the RNA strand of RNA-DNA heteroduplexes in a partially processive 3'- to 5'-endonucleasic mode. Neo-synthesized pregenomic RNA (pgRNA) are encapsidated together with the P protein, and reverse-transcribed inside the nucleocapsid. Initiation of reverse-transcription occurs first by binding the epsilon loop on the pgRNA genome, and is initiated by protein priming, thereby the 5'-end of (-)DNA is covalently linked to P protein. Partial (+)DNA is synthesized from the (-)DNA template and generates the relaxed circular DNA (RC-DNA) genome. After budding and infection, the RC-DNA migrates in the nucleus, and is converted into a plasmid-like covalently closed circular DNA (cccDNA). The activity of P protein does not seem to be necessary for cccDNA generation, and is presumably released from (+)DNA by host nuclear DNA repair machinery. In Homo sapiens (Human), this protein is Protein P.